A 239-amino-acid polypeptide reads, in one-letter code: 7-cyano-7-deazaguanine synthase (239 aa).

13 to 23 contributes to the ATP binding site; sequence FSGGQDSTTCL. Residues cysteine 201, cysteine 216, cysteine 219, and cysteine 222 each coordinate Zn(2+).

This sequence belongs to the QueC family. Zn(2+) is required as a cofactor.

The catalysed reaction is 7-carboxy-7-deazaguanine + NH4(+) + ATP = 7-cyano-7-deazaguanine + ADP + phosphate + H2O + H(+). Its pathway is purine metabolism; 7-cyano-7-deazaguanine biosynthesis. Catalyzes the ATP-dependent conversion of 7-carboxy-7-deazaguanine (CDG) to 7-cyano-7-deazaguanine (preQ(0)). The protein is 7-cyano-7-deazaguanine synthase of Bradyrhizobium sp. (strain BTAi1 / ATCC BAA-1182).